Reading from the N-terminus, the 113-residue chain is Replication initiation control protein YabA (113 aa).

Residues His-88, Cys-90, Cys-104, and Cys-107 each coordinate Zn(2+).

This sequence belongs to the YabA family. Homotetramer. Interacts with both DnaA and DnaN, acting as a bridge between these two proteins. Zn(2+) serves as cofactor.

The protein localises to the cytoplasm. It localises to the nucleoid. Involved in control of chromosome replication initiation. Inhibits the cooperative binding of DnaA to the oriC region, thus negatively regulating initiation of chromosome replication. Inhibits the ability of DnaA-ATP to form a helix on DNA; does not disassemble preformed DnaA-DNA helices. Decreases the residence time of DnaA on the chromosome at its binding sites (oriC, replication forks and promoter-binding sites). Tethers DnaA to the replication machinery via the DNA polymerase beta sliding clamp subunit (dnaN). Associates with oriC and other DnaA targets on the chromosome in a DnaA-dependent manner. This chain is Replication initiation control protein YabA, found in Staphylococcus saprophyticus subsp. saprophyticus (strain ATCC 15305 / DSM 20229 / NCIMB 8711 / NCTC 7292 / S-41).